A 278-amino-acid chain; its full sequence is Large ribosomal subunit protein uL2 (278 aa).

Residues 201–278 are disordered; it reads HGNINDGKAG…IMRSRHQRKK (78 aa). The span at 210-221 shows a compositional bias: basic residues; the sequence is GRSRWRGKKPHV.

The protein belongs to the universal ribosomal protein uL2 family. Part of the 50S ribosomal subunit. Forms a bridge to the 30S subunit in the 70S ribosome.

One of the primary rRNA binding proteins. Required for association of the 30S and 50S subunits to form the 70S ribosome, for tRNA binding and peptide bond formation. It has been suggested to have peptidyltransferase activity; this is somewhat controversial. Makes several contacts with the 16S rRNA in the 70S ribosome. The chain is Large ribosomal subunit protein uL2 from Rhizobium rhizogenes (strain K84 / ATCC BAA-868) (Agrobacterium radiobacter).